Reading from the N-terminus, the 385-residue chain is Cell division protein FtsZ (385 aa).

GTP is bound by residues Gly-37 to Asn-41, Gly-125 to Gly-127, Glu-156, Lys-160, and Asp-204.

This sequence belongs to the FtsZ family. In terms of assembly, homodimer. Polymerizes to form a dynamic ring structure in a strictly GTP-dependent manner. Interacts directly with several other division proteins.

It is found in the cytoplasm. Essential cell division protein that forms a contractile ring structure (Z ring) at the future cell division site. The regulation of the ring assembly controls the timing and the location of cell division. One of the functions of the FtsZ ring is to recruit other cell division proteins to the septum to produce a new cell wall between the dividing cells. Binds GTP and shows GTPase activity. This Helicobacter pylori (strain ATCC 700392 / 26695) (Campylobacter pylori) protein is Cell division protein FtsZ.